A 657-amino-acid polypeptide reads, in one-letter code: Kinesin-like protein KIF22 (657 aa).

Residues 1–33 form a disordered region; it reads MNVRAKKKPQQREMASASSGPSRSLSKGGVSRR. Positions 16-33 are enriched in low complexity; that stretch reads SASSGPSRSLSKGGVSRR. The Kinesin motor domain maps to 38–360; that stretch reads RVRVAVRLRP…LNFTARSKEV (323 aa). An ATP-binding site is contributed by 119 to 126; that stretch reads GPTGAGKT. The tract at residues 388 to 415 is disordered; the sequence is PSEAKKAKGPEEESTGSPESTAAPASAS. Residues 402–415 are compositionally biased toward low complexity; it reads TGSPESTAAPASAS. Phosphoserine occurs at positions 404, 419, and 444. Lys-457 participates in a covalent cross-link: Glycyl lysine isopeptide (Lys-Gly) (interchain with G-Cter in SUMO2). Positions 457–502 form a coiled coil; sequence KRERMVLIKTVEEKNLEIERLKMKQKELEAKVLAQEALDPKEKENT. Ser-537, Ser-554, and Ser-573 each carry phosphoserine.

This sequence belongs to the TRAFAC class myosin-kinesin ATPase superfamily. Kinesin family. In terms of assembly, interacts with FAM83D and SIAH1. In terms of processing, ubiquitinated; mediated by SIAH1 and leading to its subsequent proteasomal degradation.

It localises to the nucleus. The protein localises to the cytoplasm. The protein resides in the cytoskeleton. Kinesin family member that is involved in spindle formation and the movements of chromosomes during mitosis and meiosis. Binds to microtubules and to DNA. Plays a role in congression of laterally attached chromosomes in NDC80-depleted cells. The chain is Kinesin-like protein KIF22 (Kif22) from Rattus norvegicus (Rat).